The primary structure comprises 69 residues: Conotoxin Gla-TxXI (69 aa).

Residues Met1 to Ala25 form the signal peptide. Intrachain disulfides connect Cys26/Cys40, Cys33/Cys45, Cys39/Cys49, and Cys44/Cys53. Glu29 is subject to 4-carboxyglutamate. Position 56 is a proline amide (Pro56). The propeptide occupies Ala60–Arg69.

In terms of processing, contains 4 disulfide bonds. As to expression, expressed by the venom duct.

It is found in the secreted. The polypeptide is Conotoxin Gla-TxXI (Conus textile (Cloth-of-gold cone)).